A 320-amino-acid chain; its full sequence is Serpentine receptor class delta-28 (320 aa).

7 helical membrane passes run 5-25 (LLHT…MYLA), 38-58 (AIIT…FFVM), 83-103 (ACYI…IWMI), 122-142 (SLVF…ATWI), 176-196 (LTLI…YAWI), 230-250 (FLPS…TQLI), and 258-278 (LVSV…ILFV).

It belongs to the nematode receptor-like protein srd family.

It is found in the membrane. This chain is Serpentine receptor class delta-28 (srd-28), found in Caenorhabditis elegans.